A 487-amino-acid polypeptide reads, in one-letter code: Bifunctional protein GlmU (487 aa).

The interval 1–232 is pyrophosphorylase; that stretch reads MAVIVLAAGA…AAELAGVNDR (232 aa). Residues 6 to 9, lysine 20, glutamine 77, and 82 to 83 each bind UDP-N-acetyl-alpha-D-glucosamine; these read LAAG and GT. Residue aspartate 107 coordinates Mg(2+). Residues glycine 142, glutamate 157, asparagine 172, and asparagine 230 each coordinate UDP-N-acetyl-alpha-D-glucosamine. Position 230 (asparagine 230) interacts with Mg(2+). Positions 233–253 are linker; that stretch reads VQLAAAGAELNRRTVTAAMRG. Residues 254–487 form an N-acetyltransferase region; sequence GATIVDPATT…PTSTPQADQE (234 aa). UDP-N-acetyl-alpha-D-glucosamine is bound by residues arginine 335 and lysine 353. The active-site Proton acceptor is the histidine 365. Residues tyrosine 368 and asparagine 379 each contribute to the UDP-N-acetyl-alpha-D-glucosamine site. Acetyl-CoA is bound by residues alanine 382, 388 to 389, serine 407, and alanine 425; that span reads NY. Residues 453–487 form a disordered region; that stretch reads AKKRPGTPAAEAGEAAAKRVAEGGSPTSTPQADQE. Residues 477-487 are compositionally biased toward polar residues; sequence SPTSTPQADQE.

It in the N-terminal section; belongs to the N-acetylglucosamine-1-phosphate uridyltransferase family. The protein in the C-terminal section; belongs to the transferase hexapeptide repeat family. In terms of assembly, homotrimer. Requires Mg(2+) as cofactor.

The protein localises to the cytoplasm. It carries out the reaction alpha-D-glucosamine 1-phosphate + acetyl-CoA = N-acetyl-alpha-D-glucosamine 1-phosphate + CoA + H(+). The catalysed reaction is N-acetyl-alpha-D-glucosamine 1-phosphate + UTP + H(+) = UDP-N-acetyl-alpha-D-glucosamine + diphosphate. It functions in the pathway nucleotide-sugar biosynthesis; UDP-N-acetyl-alpha-D-glucosamine biosynthesis; N-acetyl-alpha-D-glucosamine 1-phosphate from alpha-D-glucosamine 6-phosphate (route II): step 2/2. The protein operates within nucleotide-sugar biosynthesis; UDP-N-acetyl-alpha-D-glucosamine biosynthesis; UDP-N-acetyl-alpha-D-glucosamine from N-acetyl-alpha-D-glucosamine 1-phosphate: step 1/1. It participates in bacterial outer membrane biogenesis; LPS lipid A biosynthesis. Catalyzes the last two sequential reactions in the de novo biosynthetic pathway for UDP-N-acetylglucosamine (UDP-GlcNAc). The C-terminal domain catalyzes the transfer of acetyl group from acetyl coenzyme A to glucosamine-1-phosphate (GlcN-1-P) to produce N-acetylglucosamine-1-phosphate (GlcNAc-1-P), which is converted into UDP-GlcNAc by the transfer of uridine 5-monophosphate (from uridine 5-triphosphate), a reaction catalyzed by the N-terminal domain. The chain is Bifunctional protein GlmU from Corynebacterium jeikeium (strain K411).